We begin with the raw amino-acid sequence, 364 residues long: NF-kappa-B inhibitor epsilon (364 aa).

The segment at 1–108 is disordered; it reads MSDARKGPDE…GSPLPPAGVL (108 aa). The residue at position 18 (serine 18) is a Phosphoserine. Positions 36–48 are enriched in low complexity; that stretch reads PGSGSSQSGCPQP. Residues 51–70 show a composition bias toward basic and acidic residues; that stretch reads HAPETHKEPEKEDADGERAD. The segment covering 93–104 has biased composition (pro residues); that stretch reads PSPPAPGSPLPP. ANK repeat units lie at residues 122 to 155, 157 to 186, 190 to 219, 233 to 262, 267 to 296, and 300 to 329; these read DGDT…DIQN, LYQT…SRIL, HGDT…EPGR, QGLA…DIDV, SGKT…RVDA, and NGCT…DSLL.

The protein belongs to the NF-kappa-B inhibitor family. In terms of assembly, interacts with RELA, REL, NFKB1 nuclear factor NF-kappa-B p50 subunit and NFKB2 nuclear factor NF-kappa-B p52 subunit. Interacts with HNRNPA2B1; the interaction may be mediated by the RRM2 domain of HNRNPA2B1, and HNRNPA2B1 may interact simultaneously with FAM76B and either NFKBIA or NFKBIE to form a complex. In terms of processing, serine phosphorylated; followed by proteasome-dependent degradation.

The protein localises to the cytoplasm. Sequesters NF-kappa-B transcription factor complexes in the cytoplasm, thereby inhibiting their activity. Sequestered complexes include NFKB1/p50-RELA/p65 and NFKB1/p50-REL/c-Rel complexes. Limits B-cell activation in response to pathogens, and also plays an important role in B-cell development. The sequence is that of NF-kappa-B inhibitor epsilon (Nfkbie) from Mus musculus (Mouse).